The chain runs to 201 residues: MLKQLRPALVLLTALTAITGLAYPLAMTGLAGAIFPAKAAGSLIERDGTVIGSSLIGQNFTGAGYFHGRPSATTAPDPADASKTVPAPYNAANSSGSNLGPTSAALAERVKADVEALKSENPGAPVPVDLVTTSGSGLDPDISPEAAYFQVPRVAKARNIPQDKLRDLVTARIEGRTLGVLGEPRVNVLALNLAVDDLARR.

A helical membrane pass occupies residues 7 to 29 (PALVLLTALTAITGLAYPLAMTG).

Belongs to the KdpC family. As to quaternary structure, the system is composed of three essential subunits: KdpA, KdpB and KdpC.

Its subcellular location is the cell inner membrane. In terms of biological role, part of the high-affinity ATP-driven potassium transport (or Kdp) system, which catalyzes the hydrolysis of ATP coupled with the electrogenic transport of potassium into the cytoplasm. This subunit acts as a catalytic chaperone that increases the ATP-binding affinity of the ATP-hydrolyzing subunit KdpB by the formation of a transient KdpB/KdpC/ATP ternary complex. The polypeptide is Potassium-transporting ATPase KdpC subunit (Methylobacterium radiotolerans (strain ATCC 27329 / DSM 1819 / JCM 2831 / NBRC 15690 / NCIMB 10815 / 0-1)).